The following is a 532-amino-acid chain: Fe-S cluster assembly factor HCF101, chloroplastic (532 aa).

The N-terminal 61 residues, 1–61, are a transit peptide targeting the chloroplast; that stretch reads MPLLHPQSLR…RVSQNLSVAK (61 aa). An N-acetylalanine modification is found at Ala62. Residue 184–191 participates in ATP binding; the sequence is CKGGVGKS.

This sequence belongs to the Mrp/NBP35 ATP-binding proteins family. [4Fe-4S] cluster serves as cofactor. In terms of tissue distribution, expressed in aerial tissues exposed to light. Very low expression in roots.

The protein localises to the plastid. The protein resides in the chloroplast stroma. Its function is as follows. Required for photosystem I (PSI) biosynthesis and assembly. May serve as a chloroplast scaffold protein that specifically assembles iron-sulfur (4Fe-4S) clusters and transfers them to the chloroplast PSI and ferredoxin-thioredoxin (FTR) complexes. Can assemble a 4Fe-4S cluster and transfer it to apoproteins in yeast cells. Probably not required for assembly or stability of plastidic 2Fe-2S clusters. This is Fe-S cluster assembly factor HCF101, chloroplastic (HCF101) from Arabidopsis thaliana (Mouse-ear cress).